Here is a 186-residue protein sequence, read N- to C-terminus: Elongation factor P (186 aa).

Belongs to the elongation factor P family.

Its subcellular location is the cytoplasm. It participates in protein biosynthesis; polypeptide chain elongation. Functionally, involved in peptide bond synthesis. Stimulates efficient translation and peptide-bond synthesis on native or reconstituted 70S ribosomes in vitro. Probably functions indirectly by altering the affinity of the ribosome for aminoacyl-tRNA, thus increasing their reactivity as acceptors for peptidyl transferase. The polypeptide is Elongation factor P (Shewanella halifaxensis (strain HAW-EB4)).